The following is a 241-amino-acid chain: Probable transcriptional regulatory protein Neut_0281 (241 aa).

It belongs to the TACO1 family.

It localises to the cytoplasm. The sequence is that of Probable transcriptional regulatory protein Neut_0281 from Nitrosomonas eutropha (strain DSM 101675 / C91 / Nm57).